A 567-amino-acid polypeptide reads, in one-letter code: Oxygen-dependent choline dehydrogenase (567 aa).

4–33 (DYIIIGAGSAGNVLAARLTEDADVTVLLLE) contributes to the FAD binding site. His-473 (proton acceptor) is an active-site residue.

This sequence belongs to the GMC oxidoreductase family. FAD is required as a cofactor.

It catalyses the reaction choline + A = betaine aldehyde + AH2. The enzyme catalyses betaine aldehyde + NAD(+) + H2O = glycine betaine + NADH + 2 H(+). Its pathway is amine and polyamine biosynthesis; betaine biosynthesis via choline pathway; betaine aldehyde from choline (cytochrome c reductase route): step 1/1. Involved in the biosynthesis of the osmoprotectant glycine betaine. Catalyzes the oxidation of choline to betaine aldehyde and betaine aldehyde to glycine betaine at the same rate. The chain is Oxygen-dependent choline dehydrogenase from Yersinia pseudotuberculosis serotype IB (strain PB1/+).